We begin with the raw amino-acid sequence, 311 residues long: Ribosomal RNA small subunit methyltransferase H (311 aa).

Residues 35 to 37, Asp55, Phe80, Asp102, and Gln109 contribute to the S-adenosyl-L-methionine site; that span reads GGH.

Belongs to the methyltransferase superfamily. RsmH family.

It is found in the cytoplasm. It carries out the reaction cytidine(1402) in 16S rRNA + S-adenosyl-L-methionine = N(4)-methylcytidine(1402) in 16S rRNA + S-adenosyl-L-homocysteine + H(+). Functionally, specifically methylates the N4 position of cytidine in position 1402 (C1402) of 16S rRNA. This Pseudoalteromonas atlantica (strain T6c / ATCC BAA-1087) protein is Ribosomal RNA small subunit methyltransferase H.